The sequence spans 447 residues: Phosphoglucosamine mutase (447 aa).

Residue S88 is the Phosphoserine intermediate of the active site. The Mg(2+) site is built by S88, D231, D233, and D235. At S88 the chain carries Phosphoserine.

It belongs to the phosphohexose mutase family. In terms of assembly, monomer. Also forms large aggregates. Mg(2+) serves as cofactor. In terms of processing, activated by phosphorylation. Glucose-1,6-bisphosphate or fructose-1,6-bisphosphate can activate the enzyme in vitro. However, since glucose-1,6-bisphosphate is not believed to form in methanogens, the physiologically relevant activator might be a serine kinase protein.

It carries out the reaction alpha-D-glucosamine 1-phosphate = D-glucosamine 6-phosphate. Functionally, catalyzes the conversion of glucosamine-6-phosphate to glucosamine-1-phosphate. Also catalyzes the isomerization of glucose-1-phosphate to glucose-6-phosphate, but at a 5-fold lower rate. The chain is Phosphoglucosamine mutase (glmM) from Methanococcus maripaludis (strain DSM 14266 / JCM 13030 / NBRC 101832 / S2 / LL).